Consider the following 502-residue polypeptide: Bone morphogenetic protein receptor type-1B (502 aa).

Residues methionine 1 to serine 10 are compositionally biased toward polar residues. The first 13 residues, methionine 1–serine 13, serve as a signal peptide directing secretion. The segment at methionine 1–glutamine 27 is disordered. At arginine 14–lysine 126 the chain is on the extracellular side. Intrachain disulfides connect cysteine 32/cysteine 53, cysteine 34/cysteine 38, cysteine 47/cysteine 71, cysteine 81/cysteine 95, and cysteine 96/cysteine 102. Asparagine 44 is a glycosylation site (N-linked (GlcNAc...) asparagine). Residues alanine 127–phenylalanine 148 traverse the membrane as a helical segment. The Cytoplasmic segment spans residues arginine 149 to leucine 502. The 30-residue stretch at glutamate 174–glutamine 203 folds into the GS domain. The 291-residue stretch at isoleucine 204–methionine 494 folds into the Protein kinase domain. ATP is bound by residues isoleucine 210–valine 218 and lysine 231. Aspartate 332 (proton acceptor) is an active-site residue.

This sequence belongs to the protein kinase superfamily. TKL Ser/Thr protein kinase family. TGFB receptor subfamily. The cofactor is Mg(2+). Mn(2+) serves as cofactor. Autophosphorylated.

The protein localises to the cell membrane. The catalysed reaction is L-threonyl-[receptor-protein] + ATP = O-phospho-L-threonyl-[receptor-protein] + ADP + H(+). It catalyses the reaction L-seryl-[receptor-protein] + ATP = O-phospho-L-seryl-[receptor-protein] + ADP + H(+). On ligand binding, forms a receptor complex consisting of two type II and two type I transmembrane serine/threonine kinases. Type II receptors phosphorylate and activate type I receptors which autophosphorylate, then bind and activate SMAD transcription. Positively regulates chondrocyte differentiation. This is Bone morphogenetic protein receptor type-1B (BMPR1B) from Gallus gallus (Chicken).